The primary structure comprises 159 residues: Large ribosomal subunit protein eL24 (159 aa).

The disordered stretch occupies residues A118 to R159. Over residues Q137–N147 the composition is skewed to polar residues.

The protein belongs to the eukaryotic ribosomal protein eL24 family.

The polypeptide is Large ribosomal subunit protein eL24 (Caenorhabditis elegans).